We begin with the raw amino-acid sequence, 484 residues long: Glutamyl-tRNA(Gln) amidotransferase subunit A (484 aa).

Active-site charge relay system residues include K76 and S151. S175 acts as the Acyl-ester intermediate in catalysis.

The protein belongs to the amidase family. GatA subfamily. As to quaternary structure, heterotrimer of A, B and C subunits.

The catalysed reaction is L-glutamyl-tRNA(Gln) + L-glutamine + ATP + H2O = L-glutaminyl-tRNA(Gln) + L-glutamate + ADP + phosphate + H(+). In terms of biological role, allows the formation of correctly charged Gln-tRNA(Gln) through the transamidation of misacylated Glu-tRNA(Gln) in organisms which lack glutaminyl-tRNA synthetase. The reaction takes place in the presence of glutamine and ATP through an activated gamma-phospho-Glu-tRNA(Gln). The protein is Glutamyl-tRNA(Gln) amidotransferase subunit A of Alkalilimnicola ehrlichii (strain ATCC BAA-1101 / DSM 17681 / MLHE-1).